Here is a 145-residue protein sequence, read N- to C-terminus: MSEQGDQIEQVDVVEEVEVEAAAPETVSVEDALKEVLKRALVHDGLARGIREASKALDRRQAHLCVLCESCDQEAYVKLVEALCAESETPLIKVADPKVLGEWAGLCVLDRDGNARKVVGCSCVAVTDYGEDSAALQKLLESFSA.

The protein belongs to the eukaryotic ribosomal protein eS12 family. As to quaternary structure, component of the small ribosomal subunit (SSU). Mature yeast ribosomes consist of a small (40S) and a large (60S) subunit. The 40S small subunit contains 1 molecule of ribosomal RNA (18S rRNA) and at least 33 different proteins. The large 60S subunit contains 3 rRNA molecules (25S, 5.8S and 5S rRNA) and at least 46 different proteins.

The protein resides in the cytoplasm. Functionally, component of the ribosome, a large ribonucleoprotein complex responsible for the synthesis of proteins in the cell. The small ribosomal subunit (SSU) binds messenger RNAs (mRNAs) and translates the encoded message by selecting cognate aminoacyl-transfer RNA (tRNA) molecules. The large subunit (LSU) contains the ribosomal catalytic site termed the peptidyl transferase center (PTC), which catalyzes the formation of peptide bonds, thereby polymerizing the amino acids delivered by tRNAs into a polypeptide chain. The nascent polypeptides leave the ribosome through a tunnel in the LSU and interact with protein factors that function in enzymatic processing, targeting, and the membrane insertion of nascent chains at the exit of the ribosomal tunnel. The chain is Small ribosomal subunit protein eS12A (rps1201) from Schizosaccharomyces pombe (strain 972 / ATCC 24843) (Fission yeast).